Consider the following 55-residue polypeptide: Large ribosomal subunit protein bL33 (55 aa).

This sequence belongs to the bacterial ribosomal protein bL33 family.

This Rhizobium johnstonii (strain DSM 114642 / LMG 32736 / 3841) (Rhizobium leguminosarum bv. viciae) protein is Large ribosomal subunit protein bL33.